We begin with the raw amino-acid sequence, 450 residues long: Sorting nexin-4 (450 aa).

Met-1 bears the N-acetylmethionine mark. The tract at residues 1–46 (MEQAPPDPERQLQPAPLEPLGSPDAVLGAAVGKETEGAGEESSGVD) is disordered. Ser-22 carries the post-translational modification Phosphoserine. Residues 61 to 187 (SVSEAEKRTG…YLFLTQEGNW (127 aa)) form the PX domain. Residues Arg-106, Ser-108, Lys-132, and Arg-154 each contribute to the a 1,2-diacyl-sn-glycero-3-phospho-(1D-myo-inositol-3-phosphate) site.

Belongs to the sorting nexin family. Heterodimer; heterodimerizes with SNX7 or SNX30. Interacts with WWC1/KIBRA. Identified in a complex with WWC1/KIBRA and dynein components DYNLL1 and DYNC1I2. Interacts with BIN1.

It is found in the early endosome. Its subcellular location is the early endosome membrane. Its function is as follows. Involved in the regulation of endocytosis and in several stages of intracellular trafficking. Plays a role in recycling endocytosed transferrin receptor and prevent its degradation. Involved in autophagosome assembly by regulating trafficking and recycling of phospholipid scramblase ATG9A. This chain is Sorting nexin-4, found in Pongo abelii (Sumatran orangutan).